Reading from the N-terminus, the 157-residue chain is Transcription initiation factor IIA large subunit (157 aa).

Belongs to the TFIIA subunit 1 family. TFIIA is a heterodimer of the large subunit and the small subunit gamma.

The protein localises to the nucleus. Functionally, TFIIA is a component of the transcription machinery of RNA polymerase II and plays an important role in transcriptional activation. The chain is Transcription initiation factor IIA large subunit (TOA1) from Encephalitozoon cuniculi (strain GB-M1) (Microsporidian parasite).